Reading from the N-terminus, the 89-residue chain is Small ribosomal subunit protein uS15 (89 aa).

It belongs to the universal ribosomal protein uS15 family. Part of the 30S ribosomal subunit. Forms a bridge to the 50S subunit in the 70S ribosome, contacting the 23S rRNA.

One of the primary rRNA binding proteins, it binds directly to 16S rRNA where it helps nucleate assembly of the platform of the 30S subunit by binding and bridging several RNA helices of the 16S rRNA. In terms of biological role, forms an intersubunit bridge (bridge B4) with the 23S rRNA of the 50S subunit in the ribosome. The protein is Small ribosomal subunit protein uS15 of Gluconacetobacter diazotrophicus (strain ATCC 49037 / DSM 5601 / CCUG 37298 / CIP 103539 / LMG 7603 / PAl5).